Here is a 442-residue protein sequence, read N- to C-terminus: UDP-N-acetylmuramoylalanine--D-glutamate ligase (442 aa).

This sequence belongs to the MurCDEF family.

The protein localises to the cytoplasm. It carries out the reaction UDP-N-acetyl-alpha-D-muramoyl-L-alanine + D-glutamate + ATP = UDP-N-acetyl-alpha-D-muramoyl-L-alanyl-D-glutamate + ADP + phosphate + H(+). The protein operates within cell wall biogenesis; peptidoglycan biosynthesis. Its function is as follows. Cell wall formation. Catalyzes the addition of glutamate to the nucleotide precursor UDP-N-acetylmuramoyl-L-alanine (UMA). The polypeptide is UDP-N-acetylmuramoylalanine--D-glutamate ligase (Buchnera aphidicola subsp. Baizongia pistaciae (strain Bp)).